The following is a 403-amino-acid chain: Acetyl-CoA acetyltransferase 2 (403 aa).

Cys-97 (acyl-thioester intermediate) is an active-site residue. Residue Lys-237 coordinates CoA. Residue Ala-254 coordinates K(+). Ser-258 lines the CoA pocket. Position 355 (Val-355) interacts with K(+). Active-site proton acceptor residues include His-359 and Cys-389.

Belongs to the thiolase-like superfamily. Thiolase family. Expressed in root tips, emerging leaves, young leaves, stems, and anthers at the microspore stage.

Its subcellular location is the cytoplasm. The protein localises to the peroxisome. It carries out the reaction 2 acetyl-CoA = acetoacetyl-CoA + CoA. Its pathway is metabolic intermediate biosynthesis; (R)-mevalonate biosynthesis; (R)-mevalonate from acetyl-CoA: step 1/3. Its function is as follows. Catalyzes the condensation of two molecules of acetyl-CoA to produce acetoacetyl-CoA. Generates the bulk of the acetoacetyl-CoA precursor required for the cytosol-localized, mevalonate-derived isoprenoid biosynthesis. The generated isoprenoids are required for normal growth and development. Essential protein during embryogenesis. The sequence is that of Acetyl-CoA acetyltransferase 2 from Arabidopsis thaliana (Mouse-ear cress).